The following is a 429-amino-acid chain: Tol-Pal system protein TolB (429 aa).

A signal peptide spans 1 to 22; sequence MTRRLFILITIMLCLIPALLHS. Disordered regions lie at residues 362–383 and 407–429; these read PDGTNDTRLTSEGSNEHPRWSP and GSGQTRVSGGKGRDSHPTWSPRW. The span at 363 to 374 shows a compositional bias: polar residues; sequence DGTNDTRLTSEG.

Belongs to the TolB family. As to quaternary structure, the Tol-Pal system is composed of five core proteins: the inner membrane proteins TolA, TolQ and TolR, the periplasmic protein TolB and the outer membrane protein Pal. They form a network linking the inner and outer membranes and the peptidoglycan layer.

It localises to the periplasm. In terms of biological role, part of the Tol-Pal system, which plays a role in outer membrane invagination during cell division and is important for maintaining outer membrane integrity. The sequence is that of Tol-Pal system protein TolB from Geobacter metallireducens (strain ATCC 53774 / DSM 7210 / GS-15).